Consider the following 239-residue polypeptide: Small ribosomal subunit protein uS2 (239 aa).

This sequence belongs to the universal ribosomal protein uS2 family.

The chain is Small ribosomal subunit protein uS2 from Francisella tularensis subsp. tularensis (strain WY96-3418).